Consider the following 519-residue polypeptide: Alternative NAD(P)H-ubiquinone oxidoreductase C1, chloroplastic/mitochondrial (519 aa).

The transit peptide at 1–52 directs the protein to the chloroplast and mitochondrion; the sequence is MAVLSSVSSLIPFSYGATRLTSKASLASRTSGFNLSSRWNSTRNSPMLYLSR. 82–118 is a binding site for FAD; the sequence is RVCILGGGFGGLYTALRLESLVWPEDKKPQVVLVDQS. 246-282 lines the NAD(+) pocket; it reads IKVAVVGCGYAGVELAATISERLQDRGIVQSINVSKN.

The protein belongs to the NADH dehydrogenase family. FAD is required as a cofactor. In terms of tissue distribution, flowers, roots, leaves and stems.

It localises to the mitochondrion. The protein resides in the mitochondrion inner membrane. The protein localises to the plastid. It is found in the chloroplast. Its subcellular location is the plastoglobule. The enzyme catalyses a quinone + NADH + H(+) = a quinol + NAD(+). It catalyses the reaction a ubiquinone + NADH + H(+) = a ubiquinol + NAD(+). The catalysed reaction is demethylphylloquinone + NADPH + H(+) = demethylphylloquinol + NADP(+). With respect to regulation, inhibited by dicumarol. In terms of biological role, bifunctional oxidoreductase ables to act both on prenyl naphthoquinones and on prenyl benzoquinones. May serve a respiratory function. Involved in an electron flow toward the plastoglobule plastoquinone pool. Required for plastochromanol-8 accumulation and for phylloquinone (vitamin K1) production. Probably not directly involved in cyclic or chlororespiratory electron flows under standard growth conditions, but participates in the redox metabolism of plastoquinone-9 and the tocophrol recycling-intermediate alpha-tocopherol quinone. Catalyzes the penultimate step in the biosynthesis of vitamin K1. This chain is Alternative NAD(P)H-ubiquinone oxidoreductase C1, chloroplastic/mitochondrial, found in Arabidopsis thaliana (Mouse-ear cress).